The chain runs to 118 residues: Large ribosomal subunit protein uL18 (118 aa).

Belongs to the universal ribosomal protein uL18 family. As to quaternary structure, part of the 50S ribosomal subunit; part of the 5S rRNA/L5/L18/L25 subcomplex. Contacts the 5S and 23S rRNAs.

Its function is as follows. This is one of the proteins that bind and probably mediate the attachment of the 5S RNA into the large ribosomal subunit, where it forms part of the central protuberance. The protein is Large ribosomal subunit protein uL18 of Helicobacter pylori (strain P12).